We begin with the raw amino-acid sequence, 348 residues long: D-alanine--D-alanine ligase (348 aa).

The ATP-grasp domain maps to 132 to 334 (KRVLESIGIP…YPDLIEELVT (203 aa)). 162-217 (LARLTFPIFVKPANMGSSVGISKAQTKVELRKAIQLALTYDSRVLIEQGVVAREIE) provides a ligand contact to ATP. Mg(2+) contacts are provided by aspartate 288, glutamate 301, and asparagine 303.

Belongs to the D-alanine--D-alanine ligase family. Mg(2+) is required as a cofactor. It depends on Mn(2+) as a cofactor.

The protein localises to the cytoplasm. The catalysed reaction is 2 D-alanine + ATP = D-alanyl-D-alanine + ADP + phosphate + H(+). Its pathway is cell wall biogenesis; peptidoglycan biosynthesis. Its function is as follows. Cell wall formation. This is D-alanine--D-alanine ligase from Streptococcus pyogenes serotype M6 (strain ATCC BAA-946 / MGAS10394).